The sequence spans 365 residues: tRNA/tmRNA (uracil-C(5))-methyltransferase (365 aa).

Residues glutamine 189, tyrosine 217, asparagine 222, glutamate 238, and aspartate 298 each coordinate S-adenosyl-L-methionine. The active-site Nucleophile is cysteine 323. The Proton acceptor role is filled by glutamate 357.

This sequence belongs to the class I-like SAM-binding methyltransferase superfamily. RNA M5U methyltransferase family. TrmA subfamily.

The catalysed reaction is uridine(54) in tRNA + S-adenosyl-L-methionine = 5-methyluridine(54) in tRNA + S-adenosyl-L-homocysteine + H(+). The enzyme catalyses uridine(341) in tmRNA + S-adenosyl-L-methionine = 5-methyluridine(341) in tmRNA + S-adenosyl-L-homocysteine + H(+). Dual-specificity methyltransferase that catalyzes the formation of 5-methyluridine at position 54 (m5U54) in all tRNAs, and that of position 341 (m5U341) in tmRNA (transfer-mRNA). The polypeptide is tRNA/tmRNA (uracil-C(5))-methyltransferase (Shewanella sp. (strain W3-18-1)).